We begin with the raw amino-acid sequence, 260 residues long: Snake venom serine protease homolog 2 (260 aa).

Positions Met-1–Ala-18 are cleaved as a signal peptide. Positions Gln-19 to Leu-24 are excised as a propeptide. A Peptidase S1 domain is found at Val-25–Ala-251. 6 cysteine pairs are disulfide-bonded: Cys-31–Cys-165, Cys-52–Cys-68, Cys-100–Cys-258, Cys-144–Cys-212, Cys-176–Cys-191, and Cys-202–Cys-227. Asn-123 carries N-linked (GlcNAc...) asparagine glycosylation. Asn-253 carries N-linked (GlcNAc...) asparagine glycosylation.

This sequence belongs to the peptidase S1 family. Snake venom subfamily. As to expression, expressed by the venom gland.

It is found in the secreted. Snake venom serine protease homolog that may act in the hemostasis system of the prey. The chain is Snake venom serine protease homolog 2 from Macrovipera lebetinus (Levantine viper).